A 482-amino-acid polypeptide reads, in one-letter code: Anaerobic nitric oxide reductase flavorubredoxin (482 aa).

The segment at 30–210 (LRGSSYNSYL…PFSRLVTPKI (181 aa)) is zinc metallo-hydrolase. Fe cation is bound by residues His79, Glu81, Asp83, His147, Asp166, and His227. The 140-residue stretch at 254–393 (ITIFYDTMSN…LCRQHGRDIA (140 aa)) folds into the Flavodoxin-like domain. FMN is bound by residues 260 to 264 (TMSNN) and 342 to 369 (AFGS…EMSL). A Rubredoxin-like domain is found at 426-477 (GPMMQCSVCQWVYDPAKGEPNQDVQPGTPWSEVPDNFLCPECSLGKDVFDVL). The Fe cation site is built by Cys431, Cys434, Cys464, and Cys467.

The protein in the N-terminal section; belongs to the zinc metallo-hydrolase group 3 family. As to quaternary structure, homotetramer. Fe cation is required as a cofactor. It depends on FMN as a cofactor.

It is found in the cytoplasm. The protein operates within nitrogen metabolism; nitric oxide reduction. Its function is as follows. Anaerobic nitric oxide reductase; uses NADH to detoxify nitric oxide (NO), protecting several 4Fe-4S NO-sensitive enzymes. Has at least 2 reductase partners, only one of which (NorW, flavorubredoxin reductase) has been identified. NO probably binds to the di-iron center; electrons enter from the NorW at rubredoxin and are transferred sequentially to the FMN center and the di-iron center. Also able to function as an aerobic oxygen reductase. The sequence is that of Anaerobic nitric oxide reductase flavorubredoxin from Klebsiella pneumoniae subsp. pneumoniae (strain ATCC 700721 / MGH 78578).